Consider the following 271-residue polypeptide: Formamidopyrimidine-DNA glycosylase (271 aa).

The active-site Schiff-base intermediate with DNA is Pro2. Residue Glu3 is the Proton donor of the active site. Lys56 (proton donor; for beta-elimination activity) is an active-site residue. DNA contacts are provided by His89, Arg107, and Lys151. The FPG-type zinc-finger motif lies at 236–270 (NVYGRAGLQCRQCGTPVRLSRQGQRSTYFCPHCQR). Arg260 acts as the Proton donor; for delta-elimination activity in catalysis.

This sequence belongs to the FPG family. In terms of assembly, monomer. Zn(2+) serves as cofactor.

It carries out the reaction Hydrolysis of DNA containing ring-opened 7-methylguanine residues, releasing 2,6-diamino-4-hydroxy-5-(N-methyl)formamidopyrimidine.. The catalysed reaction is 2'-deoxyribonucleotide-(2'-deoxyribose 5'-phosphate)-2'-deoxyribonucleotide-DNA = a 3'-end 2'-deoxyribonucleotide-(2,3-dehydro-2,3-deoxyribose 5'-phosphate)-DNA + a 5'-end 5'-phospho-2'-deoxyribonucleoside-DNA + H(+). Functionally, involved in base excision repair of DNA damaged by oxidation or by mutagenic agents. Acts as a DNA glycosylase that recognizes and removes damaged bases. Has a preference for oxidized purines, such as 7,8-dihydro-8-oxoguanine (8-oxoG). Has AP (apurinic/apyrimidinic) lyase activity and introduces nicks in the DNA strand. Cleaves the DNA backbone by beta-delta elimination to generate a single-strand break at the site of the removed base with both 3'- and 5'-phosphates. This Acidovorax ebreus (strain TPSY) (Diaphorobacter sp. (strain TPSY)) protein is Formamidopyrimidine-DNA glycosylase.